Consider the following 129-residue polypeptide: Allergen Bra j 1-E (129 aa).

Residues 28 to 47 (KQAMQSGSGPQPQGPQQRPP) form a disordered region. The span at 32–47 (QSGSGPQPQGPQQRPP) shows a compositional bias: low complexity.

This sequence belongs to the 2S seed storage albumins family. In terms of assembly, the mature protein consists of a small and a large chain linked by two disulfide bonds.

Its function is as follows. This is a 2S seed storage protein. In Brassica juncea (Indian mustard), this protein is Allergen Bra j 1-E.